Reading from the N-terminus, the 754-residue chain is MRAVSVWYCCPWGLLLLHCLCSFSVGSPSPSISPEKKVGSQGLRFRLAGFPRKPYEGRVEIQRAGEWGTICDDDFTLQAAHVLCRELGFTEATGWTHSAKYGPGTGRIWLDNLSCRGTEGSVTECASRGWGNSDCTHDEDAGVICKDQRLPGFSDSNVIEVEHQLQVEEVRLRPAVEWGRRPLPVTEGLVEVRLPEGWSQVCDKGWSAHNSHVVCGMLGFPGEKRVNMAFYRMLAQKKQHSFGLHSVACVGTEAHLSLCSLEFYRANDTTRCSGGNPAVVSCVLGPLYATFTGQKKQQHSKPQGEARVRLKGGAHQGEGRVEVLKAGTWGTVCDRKWDLQAASVVCRELGFGTAREALSGARMGQGMGAIHLSEVRCSGQEPSLWRCPSKNITAEDCSHSQDAGVRCNLPYTGVETKIRLSGGRSRYEGRVEVQIGIPGHLRWGLICGDDWGTLEAMVACRQLGLGYANHGLQETWYWDSGNVTEVVMSGVRCTGSELSLNQCAHHSSHITCKKTGTRFTAGVICSETASDLLLHSALVQETAYIEDRPLHMLYCAAEENCLASSARSANWPYGHRRLLRFSSQIHNLGRADFRPKAGRHSWVWHECHGHYHSMDIFTHYDILTPNGTKVAEGHKASFCLEDTECQEDVSKRYECANFGEQGITVGCWDLYRHDIDCQWIDITDVKPGNYILQVVINPNFEVAESDFTNNAMKCNCKYDGHRIWVHNCHIGDAFSEEANRRFERYPGQTSNQIV.

An N-terminal signal peptide occupies residues 1–26 (MRAVSVWYCCPWGLLLLHCLCSFSVG). SRCR domains are found at residues 45–146 (FRLA…VICK), 170–283 (VRLR…VSCV), 308–408 (VRLK…VRCN), and 418–526 (IRLS…VICS). 17 cysteine pairs are disulfide-bonded: C71-C135, C84-C145, C115-C125, C202-C272, C215-C282, C249-C259, C333-C397, C346-C407, C377-C387, C447-C512, C460-C525, C493-C503, C555-C561, C607-C655, C639-C645, C667-C677, and C714-C728. Residue N112 is glycosylated (N-linked (GlcNAc...) asparagine). An N-linked (GlcNAc...) asparagine glycan is attached at N267. Residues N391 and N482 are each glycosylated (N-linked (GlcNAc...) asparagine). The tract at residues 530 to 733 (SDLLLHSALV…WVHNCHIGDA (204 aa)) is lysyl-oxidase like. Residues H608, H610, and H612 each contribute to the Cu cation site. N626 is a glycosylation site (N-linked (GlcNAc...) asparagine). A cross-link (lysine tyrosylquinone (Lys-Tyr)) is located at residues 635–671 (KASFCLEDTECQEDVSKRYECANFGEQGITVGCWDLY). Residue Y671 is modified to 2',4',5'-topaquinone.

This sequence belongs to the lysyl oxidase family. Requires Cu cation as cofactor. Lysine tyrosylquinone residue serves as cofactor. In terms of processing, the lysine tyrosylquinone cross-link (LTQ) is generated by condensation of the epsilon-amino group of a lysine with a topaquinone produced by oxidation of tyrosine. In terms of tissue distribution, expressed in palate: predominantly present in the palate mesenchyme and tongue (at protein level). In spine, expressed in the original intervertebral disk, cartilage primordia, anterior and posterior longitudinal ligaments, meninges of spinal cord, lung and heart. In eyes, strongly expressed in the skin of the eyelid and weakly expressed in the cornea and sclera. In lung, predominantly expressed in the pulmonary mesenchyme. In developing muscle, expressed at myofiber ends (at protein level).

It localises to the secreted. The protein resides in the extracellular space. Its subcellular location is the cytoplasm. The protein localises to the nucleus. It carries out the reaction L-lysyl-[protein] + O2 + H2O = (S)-2-amino-6-oxohexanoyl-[protein] + H2O2 + NH4(+). The enzyme catalyses N(6)-acetyl-L-lysyl-[protein] + O2 + H2O = acetamide + (S)-2-amino-6-oxohexanoyl-[protein] + H2O2. In terms of biological role, protein-lysine 6-oxidase that mediates the oxidation of peptidyl lysine residues to allysine in target proteins. Catalyzes the post-translational oxidative deamination of peptidyl lysine residues in precursors of elastin and different types of collagens, a prerequisite in the formation of cross-links between collagens and elastin. Required for somite boundary formation by catalyzing oxidation of fibronectin (FN1), enhancing integrin signaling in myofibers and their adhesion to the myotendinous junction (MTJ). Acts as a regulator of inflammatory response by inhibiting differentiation of naive CD4(+) T-cells into T-helper Th17 or regulatory T-cells (Treg): acts by interacting with STAT3 in the nucleus and catalyzing both deacetylation and oxidation of lysine residues on STAT3, leading to disrupt STAT3 dimerization and inhibit STAT3 transcription activity. Oxidation of lysine residues to allysine on STAT3 preferentially takes place on lysine residues that are acetylated. Also able to catalyze deacetylation of lysine residues on STAT3. The sequence is that of Lysyl oxidase homolog 3 from Mus musculus (Mouse).